The following is a 168-amino-acid chain: uncharacterized protein (168 aa).

The chain crosses the membrane as a helical span at residues 36 to 56 (LNWWQLIVVVGIAISGIAAIA). A glycan (N-linked (GlcNAc...) asparagine; by host) is linked at Asn74. Helical transmembrane passes span 86–106 (FIII…LAWL), 115–135 (KLLT…ALTI), and 143–163 (MVKL…GFFI). N-linked (GlcNAc...) asparagine; by host glycosylation is present at Asn164.

The protein localises to the membrane. This is an uncharacterized protein from Acanthamoeba polyphaga mimivirus (APMV).